The primary structure comprises 222 residues: MSTSSSASALGRRAGPLDGLIGEIDRALRVLSGAATAARPYPAQAPEAPDALSEREKRHAAGLMRVNHVGEVCAQALYRGQAAACREPAARALLREAAAEEVDHLAWCHERLRELGSRPSLLNPFWYTGSFALGVLASYAGVPRNLGFMAETERQVEAHLDGHLRTLPVQDQRSRDIVQKMKEDEAQHRASAERAGGVPLPAPVRGAMRAMSKVMTSTAYWL.

6 residues coordinate Fe cation: Glu-71, Glu-101, His-104, Glu-153, Glu-185, and His-188.

This sequence belongs to the COQ7 family. Fe cation serves as cofactor.

The protein resides in the cell membrane. It carries out the reaction a 5-methoxy-2-methyl-3-(all-trans-polyprenyl)benzene-1,4-diol + AH2 + O2 = a 3-demethylubiquinol + A + H2O. It functions in the pathway cofactor biosynthesis; ubiquinone biosynthesis. In terms of biological role, catalyzes the hydroxylation of 2-nonaprenyl-3-methyl-6-methoxy-1,4-benzoquinol during ubiquinone biosynthesis. The chain is 3-demethoxyubiquinol 3-hydroxylase from Bordetella pertussis (strain Tohama I / ATCC BAA-589 / NCTC 13251).